Reading from the N-terminus, the 56-residue chain is UPF0391 membrane protein Rru_A0119 (56 aa).

Helical transmembrane passes span Trp4–Ala24 and Ile30–Phe50.

Belongs to the UPF0391 family.

It is found in the cell membrane. The chain is UPF0391 membrane protein Rru_A0119 from Rhodospirillum rubrum (strain ATCC 11170 / ATH 1.1.1 / DSM 467 / LMG 4362 / NCIMB 8255 / S1).